Reading from the N-terminus, the 406-residue chain is tRNA-specific 2-thiouridylase MnmA (406 aa).

ATP-binding positions include 42–49 (GLSGGVDS) and L68. C129 serves as the catalytic Nucleophile. C129 and C239 form a disulfide bridge. An ATP-binding site is contributed by G154. The interval 189–191 (KDQ) is interaction with tRNA. The Cysteine persulfide intermediate role is filled by C239. An interaction with tRNA region spans residues 344–345 (RY).

The protein belongs to the MnmA/TRMU family.

The protein resides in the cytoplasm. The catalysed reaction is S-sulfanyl-L-cysteinyl-[protein] + uridine(34) in tRNA + AH2 + ATP = 2-thiouridine(34) in tRNA + L-cysteinyl-[protein] + A + AMP + diphosphate + H(+). Its function is as follows. Catalyzes the 2-thiolation of uridine at the wobble position (U34) of tRNA, leading to the formation of s(2)U34. This is tRNA-specific 2-thiouridylase MnmA from Prochlorococcus marinus (strain SARG / CCMP1375 / SS120).